The primary structure comprises 123 residues: Small ribosomal subunit protein uS13 (123 aa).

Positions 96-123 (LPVRGQRTKTNARTRKGPKKTVGARRKK) are disordered.

It belongs to the universal ribosomal protein uS13 family. Part of the 30S ribosomal subunit. Forms a loose heterodimer with protein S19. Forms two bridges to the 50S subunit in the 70S ribosome.

In terms of biological role, located at the top of the head of the 30S subunit, it contacts several helices of the 16S rRNA. In the 70S ribosome it contacts the 23S rRNA (bridge B1a) and protein L5 of the 50S subunit (bridge B1b), connecting the 2 subunits; these bridges are implicated in subunit movement. Contacts the tRNAs in the A and P-sites. The protein is Small ribosomal subunit protein uS13 of Desulforamulus reducens (strain ATCC BAA-1160 / DSM 100696 / MI-1) (Desulfotomaculum reducens).